The primary structure comprises 730 residues: ATP-binding cassette sub-family D member 1 (730 aa).

Helical transmembrane passes span 24 to 44, 137 to 157, 169 to 189, and 276 to 296; these read AFSY…VTIP, FCLI…GALV, ALVL…NSMI, and ANII…AHIL. The 238-residue stretch at 136 to 373 folds into the ABC transmembrane type-1 domain; that stretch reads TFCLISRTFL…WFIMLEQFFM (238 aa). In terms of domain architecture, ABC transporter spans 505 to 727; sequence ISLRAVPVVT…MNSDEEQKGQ (223 aa). 538 to 545 provides a ligand contact to ATP; the sequence is GPNGCGKS.

The protein belongs to the ABC transporter superfamily. ABCD family. Peroxisomal fatty acyl CoA transporter (TC 3.A.1.203) subfamily.

The protein localises to the peroxisome membrane. It catalyses the reaction an acyl-CoA(out) + ATP + H2O = an acyl-CoA(in) + ADP + phosphate + H(+). Functionally, plays a role in the transport of free very-long-chain fatty acids (VLCFAs) as well as their CoA-esters across the peroxisomal membrane by acting as an ATP-specific binding subunit releasing ADP after ATP hydrolysis. Thus, plays a role in regulation of VLCFAs and energy metabolism namely, in the degradation and biosynthesis of fatty acids by beta-oxidation, mitochondrial function and microsomal fatty acid elongation. The polypeptide is ATP-binding cassette sub-family D member 1 (Drosophila melanogaster (Fruit fly)).